We begin with the raw amino-acid sequence, 740 residues long: Ion-translocating oxidoreductase complex subunit C (740 aa).

4Fe-4S ferredoxin-type domains are found at residues 369–397 and 407–436; these read GEPQ…QQLY and KATT…VQYF. [4Fe-4S] cluster is bound by residues C377, C380, C383, C387, C416, C419, C422, and C426. Residues 598-716 form a disordered region; sequence AKARKLEQQQ…EPEEQVDPRK (119 aa).

This sequence belongs to the 4Fe4S bacterial-type ferredoxin family. RnfC subfamily. In terms of assembly, the complex is composed of six subunits: RsxA, RsxB, RsxC, RsxD, RsxE and RsxG. Requires [4Fe-4S] cluster as cofactor.

Its subcellular location is the cell inner membrane. In terms of biological role, part of a membrane-bound complex that couples electron transfer with translocation of ions across the membrane. Required to maintain the reduced state of SoxR. The polypeptide is Ion-translocating oxidoreductase complex subunit C (Shigella flexneri serotype 5b (strain 8401)).